A 125-amino-acid chain; its full sequence is Oxytocin-neurophysin 1 (125 aa).

The N-terminal stretch at 1 to 19 (MAGPSLACCLLGLLALTSA) is a signal peptide. The cysteines at positions 20 and 25 are disulfide-linked. Glycine amide is present on glycine 28. Intrachain disulfides connect cysteine 41–cysteine 85, cysteine 44–cysteine 58, cysteine 52–cysteine 75, cysteine 59–cysteine 65, cysteine 92–cysteine 104, cysteine 98–cysteine 116, and cysteine 105–cysteine 110.

This sequence belongs to the vasopressin/oxytocin family. In terms of assembly, interacts with oxytocin receptor (Ki=1.5 nM). Interacts with vasopressin V1aR/AVPR1A (Ki=37 nM), V1bR/AVPR1B (Ki=222 nM), and V2R/AVPR2 receptors (Ki=823 nM).

In terms of biological role, neurophysin 1 specifically binds oxytocin. Functionally, oxytocin causes contraction of the smooth muscle of the uterus and of the mammary gland. Acts by binding to oxytocin receptor (OXTR). The sequence is that of Oxytocin-neurophysin 1 (OXT) from Sus scrofa (Pig).